The sequence spans 190 residues: Elongation factor P 1 (190 aa).

It belongs to the elongation factor P family.

The protein resides in the cytoplasm. It participates in protein biosynthesis; polypeptide chain elongation. Functionally, involved in peptide bond synthesis. Stimulates efficient translation and peptide-bond synthesis on native or reconstituted 70S ribosomes in vitro. Probably functions indirectly by altering the affinity of the ribosome for aminoacyl-tRNA, thus increasing their reactivity as acceptors for peptidyl transferase. The protein is Elongation factor P 1 (efp1) of Lactobacillus johnsonii (strain CNCM I-12250 / La1 / NCC 533).